Here is a 914-residue protein sequence, read N- to C-terminus: UPF0182 protein PTH_1387 (914 aa).

Transmembrane regions (helical) follow at residues 7-27 (FAAY…IAGA), 48-68 (IIIS…VLLF), 109-129 (LLLL…NFTV), 173-193 (INWV…VVYF), 209-229 (YHFS…YQLE), 252-272 (TLLA…AILI), and 281-301 (LVIY…GIYP).

It belongs to the UPF0182 family.

The protein resides in the cell membrane. The chain is UPF0182 protein PTH_1387 from Pelotomaculum thermopropionicum (strain DSM 13744 / JCM 10971 / SI).